We begin with the raw amino-acid sequence, 342 residues long: Alanine racemase (342 aa).

Lysine 33 serves as the catalytic Proton acceptor; specific for D-alanine. N6-(pyridoxal phosphate)lysine is present on lysine 33. Arginine 128 is a substrate binding site. The Proton acceptor; specific for L-alanine role is filled by tyrosine 240. Methionine 288 provides a ligand contact to substrate.

This sequence belongs to the alanine racemase family. The cofactor is pyridoxal 5'-phosphate.

It catalyses the reaction L-alanine = D-alanine. It participates in amino-acid biosynthesis; D-alanine biosynthesis; D-alanine from L-alanine: step 1/1. Functionally, catalyzes the interconversion of L-alanine and D-alanine. May also act on other amino acids. The protein is Alanine racemase (alr) of Jannaschia sp. (strain CCS1).